The chain runs to 859 residues: Protein argonaute-2 (859 aa).

Residues 1–27 (MYSGAGPALAPPAPPPPIQGYAFKPPP) are disordered. Y2 is modified (3'-nitrotyrosine). A compositionally biased stretch (pro residues) spans 9-27 (LAPPAPPPPIQGYAFKPPP). One can recognise a PAZ domain in the interval 229–348 (PVIEFVCEVL…LPLEVCNIVA (120 aa)). An interaction with guide RNA region spans residues 311-316 (YFKDRH). Phosphoserine is present on S387. In terms of domain architecture, Piwi spans 517–818 (LVVVILPGKT…VAFRARYHLV (302 aa)). Positions 524 to 566 (GKTPVYAEVKRVGDTVLGMATQCVQMKNVQRTTPQTLSNLCLK) are interaction with guide RNA. Residues 587–590 (FQQP) form an interaction with GW182 family members region. D597 contributes to the a divalent metal cation binding site. Residues 650 to 660 (LIQFYKSTRFK) are interaction with GW182 family members. Position 669 (D669) interacts with a divalent metal cation. Residue P700 is modified to 4-hydroxyproline. Interaction with guide RNA regions lie at residues 709-710 (KR), 753-761 (HAGIQGTSR), and 790-812 (YVRC…VAFR). H807 is a binding site for a divalent metal cation. Residues S824, S828, S831, and S834 each carry the phosphoserine modification.

Belongs to the argonaute family. Ago subfamily. As to quaternary structure, interacts with DICER1 through its Piwi domain and with TARBP2 during assembly of the RNA-induced silencing complex (RISC). Together, DICER1, AGO2 and TARBP2 constitute the trimeric RISC loading complex (RLC), or micro-RNA (miRNA) loading complex (miRLC). Within the RLC/miRLC, DICER1 and TARBP2 are required to process precursor miRNAs (pre-miRNAs) to mature miRNAs and then load them onto AGO2. AGO2 bound to the mature miRNA constitutes the minimal RISC and may subsequently dissociate from DICER1 and TARBP2. Note however that the term RISC has also been used to describe the trimeric RLC/miRLC. The formation of RISC complexes containing siRNAs rather than miRNAs appears to occur independently of DICER1. Interacts with AGO1. Also interacts with DDB1, DDX5, DDX6, DDX20, DHX30, DHX36, DDX47, DHX9, ELAVL, FXR1, GEMIN4, HNRNPF, IGF2BP1, ILF3, IMP8, MATR3, PABPC1, PRMT5, P4HA1, P4HB, RBM4, SART3, TNRC6A, TNRC6B, UPF1 and YBX1. Interacts with the P-body components DCP1A and XRN1. Associates with polysomes and messenger ribonucleoproteins (mNRPs). Interacts with RBM4; the interaction is modulated under stress-induced conditions, occurs under both cell proliferation and differentiation conditions and in an RNA- and phosphorylation-independent manner. Interacts with LIMD1, WTIP and AJUBA. Interacts with TRIM71; the interaction increases in presence of RNA. Interacts with APOBEC3G in an RNA-dependent manner. Interacts with APOBEC3A, APOBEC3C, APOBEC3F and APOBEC3H. Interacts with DICER1, TARBP2, EIF6, MOV10 and RPL7A (60S ribosome subunit); they form a large RNA-induced silencing complex (RISC). Interacts with FMR1. Interacts with ZFP36. Found in a complex, composed of AGO2, CHD7 and ARB2A. Interacts with RC3H1; the interaction is RNA independent. Interacts with SND1. Interacts with SYT11. Interacts with CLNK. Interacts with GARRE1. Interacts with GRB2; this interaction is important for the formation of a ternary complex containing GRB2, AGO2 and DICER1. In terms of assembly, (Microbial infection) Interacts with Epstein-Barr virus (EBV) tegument protein BGLF2; this interaction participates in the regulation of cellular miRNA by the virus, leading to enhanced SUMOylation. (Microbial infection) Interacts with rotavirus A non-structural protein 5; this interaction probably plays a role in the sequestration of AGO2 in viral factories. As to quaternary structure, (Microbial infection) Interacts with human herpesvirus 8 protein MTA/ORF57; this interaction inhibits P-body formation. It depends on Mg(2+) as a cofactor. Mn(2+) serves as cofactor. Hydroxylated. 4-hydroxylation appears to enhance protein stability but is not required for miRNA-binding or endonuclease activity. Post-translationally, ubiquitinated on surface-exposed lysines by a SCF-like E3 ubiquitin-protein ligase complex containing ZSWIM8 during target-directed microRNA degradation (TDMD), a process that mediates degradation of microRNAs (miRNAs). Ubiquitination by the SCF-like E3 ubiquitin-protein ligase complex containing ZSWIM8 leads to its subsequent degradation, thereby exposing miRNAs for degradation. ZSWIM8 recognizes and binds AGO2 when it is engaged with a TDMD target. In terms of processing, phosphorylated. A phosphorylation cycle of C-terminal serine cluster (Ser-824-Ser-834) regulates the release of target mRNAs. Target-binding leads to phosphorylation of these residues by CSNK1A1, which reduces the affinity of AGO2 for mRNA and enables target release. The ANKRD52-PPP6C phosphatase complex dephosphorylates the residues, which primes AGO2 for binding a new target. Phosphorylation at Ser-387 by AKT3; leads to up-regulate translational repression of microRNA target and down-regulate endonucleolytic cleavage.

It is found in the cytoplasm. It localises to the P-body. The protein localises to the nucleus. The catalysed reaction is Endonucleolytic cleavage to 5'-phosphomonoester.. Its activity is regulated as follows. Inhibited by EDTA. Its function is as follows. Required for RNA-mediated gene silencing (RNAi) by the RNA-induced silencing complex (RISC). The 'minimal RISC' appears to include AGO2 bound to a short guide RNA such as a microRNA (miRNA) or short interfering RNA (siRNA). These guide RNAs direct RISC to complementary mRNAs that are targets for RISC-mediated gene silencing. The precise mechanism of gene silencing depends on the degree of complementarity between the miRNA or siRNA and its target. Binding of RISC to a perfectly complementary mRNA generally results in silencing due to endonucleolytic cleavage of the mRNA specifically by AGO2. Binding of RISC to a partially complementary mRNA results in silencing through inhibition of translation, and this is independent of endonuclease activity. May inhibit translation initiation by binding to the 7-methylguanosine cap, thereby preventing the recruitment of the translation initiation factor eIF4-E. May also inhibit translation initiation via interaction with EIF6, which itself binds to the 60S ribosomal subunit and prevents its association with the 40S ribosomal subunit. The inhibition of translational initiation leads to the accumulation of the affected mRNA in cytoplasmic processing bodies (P-bodies), where mRNA degradation may subsequently occur. In some cases RISC-mediated translational repression is also observed for miRNAs that perfectly match the 3' untranslated region (3'-UTR). Can also up-regulate the translation of specific mRNAs under certain growth conditions. Binds to the AU element of the 3'-UTR of the TNF (TNF-alpha) mRNA and up-regulates translation under conditions of serum starvation. Also required for transcriptional gene silencing (TGS), in which short RNAs known as antigene RNAs or agRNAs direct the transcriptional repression of complementary promoter regions. (Microbial infection) Upon Sars-CoV-2 infection, associates with viral miRNA-like small RNA, CoV2-miR-O7a, and may repress mRNAs, such as BATF2, to evade the IFN response. The protein is Protein argonaute-2 of Homo sapiens (Human).